The following is a 314-amino-acid chain: Acetyl-coenzyme A carboxylase carboxyl transferase subunit alpha (314 aa).

Residues 38–292 (RLERKSAALL…ANAIDEELDA (255 aa)) enclose the CoA carboxyltransferase C-terminal domain.

The protein belongs to the AccA family. Acetyl-CoA carboxylase is a heterohexamer composed of biotin carboxyl carrier protein (AccB), biotin carboxylase (AccC) and two subunits each of ACCase subunit alpha (AccA) and ACCase subunit beta (AccD).

The protein localises to the cytoplasm. It catalyses the reaction N(6)-carboxybiotinyl-L-lysyl-[protein] + acetyl-CoA = N(6)-biotinyl-L-lysyl-[protein] + malonyl-CoA. It participates in lipid metabolism; malonyl-CoA biosynthesis; malonyl-CoA from acetyl-CoA: step 1/1. In terms of biological role, component of the acetyl coenzyme A carboxylase (ACC) complex. First, biotin carboxylase catalyzes the carboxylation of biotin on its carrier protein (BCCP) and then the CO(2) group is transferred by the carboxyltransferase to acetyl-CoA to form malonyl-CoA. This chain is Acetyl-coenzyme A carboxylase carboxyl transferase subunit alpha, found in Erythrobacter litoralis (strain HTCC2594).